The following is a 739-amino-acid chain: Nucleoprotein (739 aa).

Residues 334–363 (VNVGEQYQQLREAATEAEKQLQQYAESREL) adopt a coiled-coil conformation. The tract at residues 415-646 (PKTSGHYDDD…QDSDNTQPEH (232 aa)) is disordered. Low complexity-rich tracts occupy residues 449-458 (SQDTTIPDVV) and 504-514 (KGGQQKNSQKG). Over residues 520 to 530 (RQTQSRPTQNV) the composition is skewed to polar residues. Acidic residues predominate over residues 567–579 (EEADPLDDADDET). Over residues 611–638 (YRDHSEKRELPQDEQQDQDHTQEARNQD) the composition is skewed to basic and acidic residues.

The protein belongs to the filoviruses nucleoprotein family. As to quaternary structure, homooligomer. Homomultimerizes to form the nucleocapsid. Binds to viral genomic RNA. Interacts with VP35 and VP30 to form the nucleocapsid. Interacts with host PPP2R5C; this interaction leads to VP30 dephosphorylation and viral transcription. Interacts with VP24; this interaction facilitates nucleocapsid assembly and genome packaging. Interacts with matrix protein VP40; this interaction allows recruitment of the nucleocapsid into progeny virions. Interacts with host STAU1. Interacts with host NXF1 (via RNA-binding domain); this interaction recruits NXF1 to the inclusion bodies were viral replication takes place, probably to export viral mRNA-NXF1 complexes from these sites. Interacts with host CCDC92; this interaction sequesters NP in the host cytoplasm. Interacts with host TRIM14. Post-translationally, phosphorylated and O-glycosylated by host. Acetylated by host EP300 in vitro.

It is found in the virion. It localises to the host cytoplasm. Its function is as follows. Oligomerizes into helical capsid to encapsidate the viral genome, protecting it from nucleases and the cellular innate immune response. VP35 binds to and stabilizes monomeric NP, keeping it soluble. Upon virus replication, NP is recruited to bind cooperatively viral genomic RNA and VP35 is released. The encapsidated genomic RNA is termed the nucleocapsid and serves as template for transcription and replication. The nucleocapsid is helical with a pitch of 10.81 NP per turn and a diameter of about 22nm. Each NP binds to six nucleotides of viral genomic RNA, three being exposed to the solvant and three hidden into the nucleocapsid. Also recruits host PPP2R5C phosphatase to dephosphorylate VP30 and thereby promote viral transcription. Upon virion assembly and budding, NP binds to VP24 and possibly host STAU1. The chain is Nucleoprotein (NP) from Epomops franqueti (Franquet's epauletted fruit bat).